The following is a 163-amino-acid chain: Lysosomal enzyme trafficking factor (163 aa).

A run of 2 helical transmembrane segments spans residues M40–F60 and L98–L118.

This sequence belongs to the LYSET family. Interacts with GNPTAB; this interaction is important for proper localization of GNPTAB in Golgi stacks. Interacts with MBTPS1.

The protein resides in the golgi apparatus membrane. Functionally, required for mannose-6-phosphate-dependent trafficking of lysosomal enzymes. LYSET bridges GlcNAc-1-phosphate transferase (GNPTAB), to the membrane-bound transcription factor site-1 protease (MBTPS1), thus allowing proteolytic activation of the GNPTAB. GNPTAB is involved in the regulation of M6P-dependent Golgi-to-lysosome trafficking of lysosomal enzymes. LYSET is thus an essential factor for maturation and delivery of lysosomal hydrolases. Plays an essential function for cells that depend on lysosomal catabolism to generate nutrients. The polypeptide is Lysosomal enzyme trafficking factor (Lyset) (Mus musculus (Mouse)).